A 206-amino-acid polypeptide reads, in one-letter code: Thiamine-phosphate synthase (206 aa).

4-amino-2-methyl-5-(diphosphooxymethyl)pyrimidine is bound by residues 39–43 (QYREK) and Asn-74. The Mg(2+) site is built by Asp-75 and Asp-94. Ser-112 provides a ligand contact to 4-amino-2-methyl-5-(diphosphooxymethyl)pyrimidine. Residue 138–140 (TNT) coordinates 2-[(2R,5Z)-2-carboxy-4-methylthiazol-5(2H)-ylidene]ethyl phosphate. Residue Lys-141 participates in 4-amino-2-methyl-5-(diphosphooxymethyl)pyrimidine binding. Residues Gly-170 and 190–191 (IS) each bind 2-[(2R,5Z)-2-carboxy-4-methylthiazol-5(2H)-ylidene]ethyl phosphate.

Belongs to the thiamine-phosphate synthase family. Mg(2+) serves as cofactor.

It carries out the reaction 2-[(2R,5Z)-2-carboxy-4-methylthiazol-5(2H)-ylidene]ethyl phosphate + 4-amino-2-methyl-5-(diphosphooxymethyl)pyrimidine + 2 H(+) = thiamine phosphate + CO2 + diphosphate. The catalysed reaction is 2-(2-carboxy-4-methylthiazol-5-yl)ethyl phosphate + 4-amino-2-methyl-5-(diphosphooxymethyl)pyrimidine + 2 H(+) = thiamine phosphate + CO2 + diphosphate. The enzyme catalyses 4-methyl-5-(2-phosphooxyethyl)-thiazole + 4-amino-2-methyl-5-(diphosphooxymethyl)pyrimidine + H(+) = thiamine phosphate + diphosphate. It participates in cofactor biosynthesis; thiamine diphosphate biosynthesis; thiamine phosphate from 4-amino-2-methyl-5-diphosphomethylpyrimidine and 4-methyl-5-(2-phosphoethyl)-thiazole: step 1/1. Functionally, condenses 4-methyl-5-(beta-hydroxyethyl)thiazole monophosphate (THZ-P) and 2-methyl-4-amino-5-hydroxymethyl pyrimidine pyrophosphate (HMP-PP) to form thiamine monophosphate (TMP). The protein is Thiamine-phosphate synthase of Oceanobacillus iheyensis (strain DSM 14371 / CIP 107618 / JCM 11309 / KCTC 3954 / HTE831).